Here is a 562-residue protein sequence, read N- to C-terminus: Alpha-1D adrenergic receptor (562 aa).

The Extracellular portion of the chain corresponds to 1–90 (MTFRDILSVT…VGGLVVSAQG (90 aa)). Disordered regions lie at residues 13 to 44 (GPRASSSTGGSGAGGGAGTVGPEGPAVGGVPG) and 50 to 69 (AVVGTGSGEDNQSSTAEAGA). Over residues 21–44 (GGSGAGGGAGTVGPEGPAVGGVPG) the composition is skewed to gly residues. N-linked (GlcNAc...) asparagine glycans are attached at residues Asn60 and Asn76. A helical transmembrane segment spans residues 91–115 (VGVGVFLAAFILTAVAGNLLVILSV). The Cytoplasmic segment spans residues 116–127 (ACNRHLQTVTNY). Residues 128–153 (FIVNLAVADLLLSAAVLPFSATMEVL) traverse the membrane as a helical segment. At 154-163 (GFWPFGRTFC) the chain is on the extracellular side. A helical membrane pass occupies residues 164-186 (DVWAAVDVLCCTASILSLCTISV). Residues 187–207 (DRYVGVRHSLKYPAIMTERKA) lie on the Cytoplasmic side of the membrane. Residues 208-232 (AAILALLWAVALVVSVGPLLGWKEP) form a helical membrane-spanning segment. Over 233-245 (VPPDERFCGITEE) the chain is Extracellular. Residues 246 to 269 (VGYAIFSSVCSFYLPMAVIVVMYC) traverse the membrane as a helical segment. Residues 270-342 (RVYVVARSTT…KFSREKKAAK (73 aa)) lie on the Cytoplasmic side of the membrane. Residues 343 to 367 (TLAIVVGVFVLCWFPFFFVLPLGSL) traverse the membrane as a helical segment. Topologically, residues 368 to 374 (FPQLKPS) are extracellular. The helical transmembrane segment at 375 to 399 (EGVFKVIFWLGYFNSCVNPLIYPCS) threads the bilayer. The Cytoplasmic segment spans residues 400–562 (SREFKRAFLR…DLSNLRETDI (163 aa)). Cys413 carries S-palmitoyl cysteine lipidation. A disordered region spans residues 444-472 (QPAHRTPRGSPSPHCTPRPGLRRHAGGAG).

This sequence belongs to the G-protein coupled receptor 1 family. Adrenergic receptor subfamily. ADRA1D sub-subfamily. Interacts with FLNA (via filamin repeat 21); increases PKA-mediated phosphorylation of FLNA. Post-translationally, palmitoylated. Palmitoylation by ZDHHC21 may increase the expression of the receptor and regulate downstream signaling.

The protein localises to the cell membrane. Its function is as follows. This alpha-adrenergic receptor mediates its effect through the influx of extracellular calcium. This Mus musculus (Mouse) protein is Alpha-1D adrenergic receptor (Adra1d).